A 255-amino-acid polypeptide reads, in one-letter code: tRNA (guanine-N(1)-)-methyltransferase (255 aa).

S-adenosyl-L-methionine-binding positions include Gly113 and 133-138 (IGDYVL).

The protein belongs to the RNA methyltransferase TrmD family. Homodimer.

It is found in the cytoplasm. It catalyses the reaction guanosine(37) in tRNA + S-adenosyl-L-methionine = N(1)-methylguanosine(37) in tRNA + S-adenosyl-L-homocysteine + H(+). Functionally, specifically methylates guanosine-37 in various tRNAs. This is tRNA (guanine-N(1)-)-methyltransferase from Salmonella schwarzengrund (strain CVM19633).